A 660-amino-acid chain; its full sequence is PAN2-PAN3 deadenylation complex subunit PAN3 (660 aa).

Residues 7–36 form a C3H1-type zinc finger; the sequence is SAKDTFCKNVLIYGYCKYENKGCAFSHTVK. Disordered stretches follow at residues 36–60 and 150–186; these read KPTS…TNAD and SPVM…PTSA. Positions 43–59 are enriched in low complexity; sequence GSQGSNATTNSSGNTNA. The short motif at 59-79 is the PABPC-interacting motif-2 (PAM-2) element; sequence ADMKKKFNFNTPSFQPSTVPN. Residues 150–159 are compositionally biased toward polar residues; the sequence is SPVMAQSVST. The tract at residues 252–528 is pseudokinase domain; sequence QTLPRSNLPD…LQEFNRNHLS (277 aa). Residues Arg-304, 358–365, and 415–416 contribute to the ATP site; these read DYFPNSNT and SK. Positions 529 to 567 form a coiled coil; that stretch reads RRILNFCSNAQDSQDFMESQLSTELENARVFRLITKLNF. Positions 568–660 are knob domain; the sequence is IIDRPEYDND…DSAFRTLTRG (93 aa).

This sequence belongs to the protein kinase superfamily. PAN3 family. As to quaternary structure, homodimer. Forms a heterotrimer with a catalytic subunit PAN2 to form the poly(A)-nuclease (PAN) deadenylation complex. Interacts (via PAM-2 motif) with poly(A)-binding protein PAB1 (via PABC domain), conferring substrate specificity of the enzyme complex.

Its subcellular location is the cytoplasm. In terms of biological role, regulatory subunit of the poly(A)-nuclease (PAN) deadenylation complex, one of two cytoplasmic mRNA deadenylases involved in mRNA turnover. PAN specifically shortens poly(A) tails of RNA and the activity is stimulated by poly(A)-binding protein PAB1. PAN deadenylation is followed by rapid degradation of the shortened mRNA tails by the CCR4-NOT complex. Deadenylated mRNAs are then degraded by two alternative mechanisms, namely exosome-mediated 3'-5' exonucleolytic degradation, or deadenylation-dependent mRNA decaping and subsequent 5'-3' exonucleolytic degradation by XRN1. May also be involved in post-transcriptional maturation of mRNA poly(A) tails. PAN3 acts as a positive regulator for PAN activity, recruiting the catalytic subunit PAN2 to mRNA via its interaction with RNA and with PAB1. The sequence is that of PAN2-PAN3 deadenylation complex subunit PAN3 from Debaryomyces hansenii (strain ATCC 36239 / CBS 767 / BCRC 21394 / JCM 1990 / NBRC 0083 / IGC 2968) (Yeast).